The primary structure comprises 410 residues: F-box protein At5g36730 (410 aa).

Residues 1–46 enclose the F-box domain; the sequence is MAMSNLPRDLLEEVLSRVPVKSIAAVRSTCKNWNSLTYGQSFTKKL.

The chain is F-box protein At5g36730 from Arabidopsis thaliana (Mouse-ear cress).